A 337-amino-acid polypeptide reads, in one-letter code: Heme A synthase (337 aa).

A run of 7 helical transmembrane segments spans residues 3-23 (LARW…IGGI), 94-114 (VIGL…MIPA), 120-140 (LLAL…MVAS), 154-174 (LSAH…TALD), 191-211 (GVAW…AWVA), 248-268 (FLLH…LVVL), and 289-309 (TMVV…IAVA). Residue histidine 254 coordinates heme. Histidine 310 lines the heme pocket. The helical transmembrane segment at 311 to 331 (QLTGALLVISTAWAAHAIGTA) threads the bilayer.

Belongs to the COX15/CtaA family. Type 2 subfamily. In terms of assembly, interacts with CtaB. Heme b serves as cofactor.

It is found in the cell membrane. It carries out the reaction Fe(II)-heme o + 2 A + H2O = Fe(II)-heme a + 2 AH2. It participates in porphyrin-containing compound metabolism; heme A biosynthesis; heme A from heme O: step 1/1. Its function is as follows. Catalyzes the conversion of heme O to heme A by two successive hydroxylations of the methyl group at C8. The first hydroxylation forms heme I, the second hydroxylation results in an unstable dihydroxymethyl group, which spontaneously dehydrates, resulting in the formyl group of heme A. The protein is Heme A synthase of Erythrobacter litoralis (strain HTCC2594).